A 294-amino-acid chain; its full sequence is tRNA pseudouridine synthase B (294 aa).

The active-site Nucleophile is Asp-38.

This sequence belongs to the pseudouridine synthase TruB family. Type 1 subfamily.

The catalysed reaction is uridine(55) in tRNA = pseudouridine(55) in tRNA. Its function is as follows. Responsible for synthesis of pseudouridine from uracil-55 in the psi GC loop of transfer RNAs. This Clostridium perfringens (strain 13 / Type A) protein is tRNA pseudouridine synthase B.